A 434-amino-acid polypeptide reads, in one-letter code: F-box/kelch-repeat protein At1g55270 (434 aa).

Residues 76–122 (PPLLPGLPDDLAVACLIRVPRAEHRKLRLVCKRWYRLASGNFFYSQR) form the F-box domain. Kelch repeat units follow at residues 129 to 178 (EEWV…VLSG), 180 to 227 (HLYL…VINN), 229 to 276 (LYVA…VYDK), 278 to 321 (WFLK…SLNG), and 325 to 371 (GLDC…LHNK).

This chain is F-box/kelch-repeat protein At1g55270, found in Arabidopsis thaliana (Mouse-ear cress).